The primary structure comprises 258 residues: MLIVLSPAKTLDYDTPAHTEISSKPDFIKQSAELIKILRQSSPAQIASLMRISDPLASLNANRFAAWSPKFTQKNSKQAMLAFNGDVYEGLDAASMDAKQLAYAQSHIRILSGLYGVLRPLDLMQPYRLEMGTRLANAAGKDLYAFWGNTVTETLNQRIAEQQSEALVNLASEEYFKVVKPALLKAPVITPVFQDWKNGQYKIISFYAKRARGLMARYAATKGIKRPEELKSFDVDGYEFDAAASNEKTWMFRRKVGI.

This sequence belongs to the UPF0246 family.

The chain is UPF0246 protein mma_1385 from Janthinobacterium sp. (strain Marseille) (Minibacterium massiliensis).